A 719-amino-acid chain; its full sequence is MTEKVKQSAAVTGSDEIDIGRLVGTVIEARWWVLGTTAIFALCAVIYTFFATPIYSADALVQIEQNAGNSLVQDINSALANKPPASDAEIQLIRSRLVLGKTVDDLDLDIAVTKNTFPLFGAGWERLMGRHNEMVKVTTFTRPETMSGQIFTLKVLGDKRYQLVSDGGFSAQGVVGQPLNKDGVTMRVEAIDARPDTEFTVSKFSTLGMINNLQNNLTVTETGKDTGVLNLTFTGEDRDQIRDILNSITRNYLQQDIAWKSEEAGKSLAFLAKQLPEVRSRLDVAENKLNAFRQDKDSVDLPLEAKAVLDSMVNIDAQLNELTFKEAEISKLFTKAHPAYRTLLEKRKGLEDKKAKLNGRVTAMPKTQQEIVRLTRDVESGQQVYMQLLNKQQELKITEASTVGNVRIVDPAITQPGVLKPKKALIILGSIILGLMLSIVGVLLRSLFNRGIESPQALEEHGISVYASIPLSEWQKARDSVKTIKGIKRYKQSQLLAVGNPTDLAIEAIRSLRTSLHFAMMQAQNNVLMLTGVSSSIGKTFVCANLAAVISQTHKRVLLIDCDMRKGYTHELLGTNNVDGLSDILAGKGEIASCAKPTAIANFDLIPRGQVPPNPSELLMSERFGELIAWASSRYDLVLIDTPPILAVTDAAIVGRHVGTTLMVARYAVNTLKEVETSLSRFDQNGIQVKGVILNSIFRRATGYQDYGYYEYEYQSDSK.

Residues 1–30 (MTEKVKQSAAVTGSDEIDIGRLVGTVIEAR) are Cytoplasmic-facing. A helical transmembrane segment spans residues 31–51 (WWVLGTTAIFALCAVIYTFFA). The Periplasmic segment spans residues 52–423 (TPIYSADALV…TQPGVLKPKK (372 aa)). The chain crosses the membrane as a helical span at residues 424-444 (ALIILGSIILGLMLSIVGVLL). Residues 445 to 719 (RSLFNRGIES…YEYEYQSDSK (275 aa)) lie on the Cytoplasmic side of the membrane. Phosphotyrosine; by autocatalysis is present on Tyr-568. Tyr-707, Tyr-709, Tyr-710, Tyr-712, and Tyr-714 each carry phosphotyrosine.

Belongs to the etk/wzc family. In terms of processing, autophosphorylated. Seems to be phosphorylated through a cooperative two-step mechanism. First, Tyr-568 is phosphorylated in an intramolecular reaction that generates a significant increase of protein kinase activity. Then Tyr-707, Tyr-709, Tyr-710, Tyr-712 and Tyr-714 are phosphorylated in an intermolecular Tyr-568-dependent reaction.

Its subcellular location is the cell inner membrane. The enzyme catalyses L-tyrosyl-[protein] + ATP = O-phospho-L-tyrosyl-[protein] + ADP + H(+). Its pathway is glycan metabolism; exopolysaccharide biosynthesis. With respect to regulation, dephosphorylated and activated by wzb. Functionally, required for the extracellular polysaccharide colanic acid synthesis. The autophosphorylated form is inactive. Probably involved in the export of colanic acid from the cell to medium. The protein is Tyrosine-protein kinase wzc (wzc) of Salmonella typhi.